The primary structure comprises 79 residues: Protein OPG081 (79 aa).

At 2-8 (VDAITVL) the chain is on the intravirion side. Residues 9-29 (TAIGITVLMLLMVISGAALIV) form a helical membrane-spanning segment. Residues 30-47 (KELNPNDIFTMQSLKFNR) are Virion surface-facing. A helical membrane pass occupies residues 48–68 (AVTIFKYIGLFIYIPGTIILY). The Intravirion portion of the chain corresponds to 69–79 (ATYVKSLLMKS).

It belongs to the orthopoxvirus OPG081 family.

The protein localises to the virion membrane. Envelope protein. This is Protein OPG081 (OPG081) from Vaccinia virus (strain Western Reserve) (VACV).